The chain runs to 119 residues: Large ribosomal subunit protein bL20 (119 aa).

Belongs to the bacterial ribosomal protein bL20 family.

Functionally, binds directly to 23S ribosomal RNA and is necessary for the in vitro assembly process of the 50S ribosomal subunit. It is not involved in the protein synthesizing functions of that subunit. This is Large ribosomal subunit protein bL20 from Syntrophus aciditrophicus (strain SB).